Consider the following 231-residue polypeptide: 5'-methylthioadenosine/S-adenosylhomocysteine nucleosidase (231 aa).

Glu12 acts as the Proton acceptor in catalysis. Substrate-binding positions include Gly78, Val153, and 174–175 (ME). The active-site Proton donor is Asp198.

Belongs to the PNP/UDP phosphorylase family. MtnN subfamily.

It catalyses the reaction S-adenosyl-L-homocysteine + H2O = S-(5-deoxy-D-ribos-5-yl)-L-homocysteine + adenine. It carries out the reaction S-methyl-5'-thioadenosine + H2O = 5-(methylsulfanyl)-D-ribose + adenine. The enzyme catalyses 5'-deoxyadenosine + H2O = 5-deoxy-D-ribose + adenine. Its pathway is amino-acid biosynthesis; L-methionine biosynthesis via salvage pathway; S-methyl-5-thio-alpha-D-ribose 1-phosphate from S-methyl-5'-thioadenosine (hydrolase route): step 1/2. Functionally, catalyzes the irreversible cleavage of the glycosidic bond in both 5'-methylthioadenosine (MTA) and S-adenosylhomocysteine (SAH/AdoHcy) to adenine and the corresponding thioribose, 5'-methylthioribose and S-ribosylhomocysteine, respectively. Also cleaves 5'-deoxyadenosine, a toxic by-product of radical S-adenosylmethionine (SAM) enzymes, into 5-deoxyribose and adenine. The chain is 5'-methylthioadenosine/S-adenosylhomocysteine nucleosidase from Vibrio campbellii (strain ATCC BAA-1116).